Reading from the N-terminus, the 320-residue chain is Biotin synthase (320 aa).

Positions 46–275 (NMGRRVDLCS…YAHIRYAGGR (230 aa)) constitute a Radical SAM core domain. Positions 64, 68, and 71 each coordinate [4Fe-4S] cluster. 4 residues coordinate [2Fe-2S] cluster: serine 108, cysteine 140, cysteine 200, and arginine 270.

Belongs to the radical SAM superfamily. Biotin synthase family. In terms of assembly, homodimer. [4Fe-4S] cluster serves as cofactor. Requires [2Fe-2S] cluster as cofactor.

It catalyses the reaction (4R,5S)-dethiobiotin + (sulfur carrier)-SH + 2 reduced [2Fe-2S]-[ferredoxin] + 2 S-adenosyl-L-methionine = (sulfur carrier)-H + biotin + 2 5'-deoxyadenosine + 2 L-methionine + 2 oxidized [2Fe-2S]-[ferredoxin]. The protein operates within cofactor biosynthesis; biotin biosynthesis; biotin from 7,8-diaminononanoate: step 2/2. Its function is as follows. Catalyzes the conversion of dethiobiotin (DTB) to biotin by the insertion of a sulfur atom into dethiobiotin via a radical-based mechanism. This Acetivibrio thermocellus (strain ATCC 27405 / DSM 1237 / JCM 9322 / NBRC 103400 / NCIMB 10682 / NRRL B-4536 / VPI 7372) (Clostridium thermocellum) protein is Biotin synthase.